Reading from the N-terminus, the 504-residue chain is Cytochrome P450 6B6 (504 aa).

Cysteine 445 contacts heme.

This sequence belongs to the cytochrome P450 family. It depends on heme as a cofactor.

The protein resides in the endoplasmic reticulum membrane. It localises to the microsome membrane. The catalysed reaction is an organic molecule + reduced [NADPH--hemoprotein reductase] + O2 = an alcohol + oxidized [NADPH--hemoprotein reductase] + H2O + H(+). The protein is Cytochrome P450 6B6 (CYP6B6) of Helicoverpa armigera (Cotton bollworm).